A 121-amino-acid polypeptide reads, in one-letter code: UPF0102 protein Dhaf_3740 (121 aa).

The protein belongs to the UPF0102 family.

The polypeptide is UPF0102 protein Dhaf_3740 (Desulfitobacterium hafniense (strain DSM 10664 / DCB-2)).